Reading from the N-terminus, the 352-residue chain is 4-hydroxybenzaldehyde synthase, chloroplastic (352 aa).

The N-linked (GlcNAc...) asparagine glycan is linked to Asn-122. 2 cysteine pairs are disulfide-bonded: Cys-159-Cys-199 and Cys-190-Cys-231. Asn-247 carries an N-linked (GlcNAc...) asparagine glycan. Cysteines 289 and 339 form a disulfide. Active-site residues include His-298 and Asn-318.

Belongs to the peptidase C1 family. Forms homodimers, homotrimers and homotetramers. As to expression, mainly expressed in pods, but also present in stems, roots, leaves and embryos (at protein level).

It localises to the plastid. The protein localises to the chloroplast. It catalyses the reaction (E)-4-coumarate + H2O = 4-hydroxybenzaldehyde + acetate. Its pathway is aromatic compound metabolism; phenylpropanoid biosynthesis. Inhibited by ascorbate. Functionally, involved in the biosynthesis of vanillin (4-hydroxy-3-methoxy-benzaldehyde) and derivative natural products, key components of vanilla pods flavor. Catalyzes the conversion of (E)-4-coumarate to 4-hydroxybenzaldehyde, a vanillin precursor. Mediates the conversion of ferulic acid to 3-methoxy-4-hydroxybenzaldehyde with a very low efficiency. Cannot use cinnamic, caffeic, sinapic and o-coumaric acids as substrates. In Vanilla planifolia (Vanilla), this protein is 4-hydroxybenzaldehyde synthase, chloroplastic.